We begin with the raw amino-acid sequence, 912 residues long: MASAVSERLFSLELLVDWVCLEAGLPQPPVVAEEEQKEEGEGASPPRPSRSLCPAVAFRLLDFPTLLIYPPAGPAAPAQESRPGLVSFRRGKSCLFRLQPATLHRLLLRTPLYTLLLQLPPGHPTPAPQLLGACSISLAAAVHKVLGFAAPGSSQSHRGSFPLCNRDGERIGDIALGYRLSDLGSSLLGHLERPVASPGGGVEGMEVQKSVEVSPQTWQENQQLQQPDSEPSPGDADKPLVDVKISRAGKDLKGRAFHSKADSDYTDSMENGKTNSDMCSKGSSERSVSPPNQEGTEVELETNIICPPPLYYTHLTQEKTPPKQGKITIEPQINASEEWDDGTFLKENVNPPTHTNPPEHTNSATGESCSVLINPASVQDTGASNQTTDHPPTEQNRINTIRQLPLLNALLVELSLLYNQPMANPTHIHPHLAWLYRTEDKKSPESSVKSTCKSESKKDKLSVGENEKSVSLQYKKNQTENLKKGKYFEKKGGAPQKRVSRGKLLYGLTNTLKLRLKQTNPDMLVEYEKKEQYKKMQTQMLGAKLRIPSSKVKILSFAELYQKPHELPKDKCLESDASFAENSNTSKQISVVVDDPSTTTETKLNCATEKTVDCDENRSNNGFLGEILSPANSVVSERFICTNTLEGKVFGRKSIQSPGVFQQVAVVDRTVVDKEIDDKQVKITGDDILTVDINEKNPSTSSCSESISELKYSDDFTSPCSSEDTSRILRACDSSPGTENPKNSQHTSTSSETRLSIRKNSSAKSSILSPPFSAGSPVLSHKRFPVSKTQDKSLEEASSSDFSSSQWTEEKENQRDQNSMHNSKVIKQDHDISAKPKTRTGCKSSEKSQSPRTSQVSSYLPSNLSELELNVLDCSTLDHFEEDCDDLGSLNISKQCKDICELVINKLPGYTV.

Disordered regions lie at residues valine 31–arginine 50, lysine 209–proline 239, glycine 254–threonine 296, alanine 335–glycine 366, serine 443–serine 469, and arginine 730–tyrosine 859. The span at valine 211–serine 229 shows a compositional bias: polar residues. Positions glycine 254–serine 263 are enriched in basic and acidic residues. Over residues threonine 266 to glycine 295 the composition is skewed to polar residues. Positions glutamate 347–asparagine 362 are enriched in low complexity. Positions cysteine 452–lysine 468 are enriched in basic and acidic residues. The segment covering serine 735–leucine 768 has biased composition (polar residues). Low complexity predominate over residues glutamate 796–tryptophan 807. Polar residues predominate over residues glycine 841–tyrosine 859.

As to quaternary structure, interacts (via middle region) with microtubules.

It is found in the cytoplasm. It localises to the cytoskeleton. The protein resides in the spindle pole. The protein localises to the microtubule organizing center. Its subcellular location is the centrosome. It is found in the midbody. Its function is as follows. Microtubule-associated protein (MAP) that plays a role in the regulation of cell division; promotes microtubule stability and participates in the organization of the spindle midzone and normal progress of cytokinesis. This is Microtubule-associated protein 10 (MAP10) from Bos taurus (Bovine).